Reading from the N-terminus, the 111-residue chain is Colicin-Ia immunity protein (111 aa).

2 consecutive transmembrane segments (helical) span residues Leu-33 to Ile-53 and Thr-85 to Ile-105.

It localises to the cell membrane. Its function is as follows. This protein is able to protect a cell, which harbors the plasmid ColIa-CA53 encoding colicin Ia, against colicin Ia. The sequence is that of Colicin-Ia immunity protein from Escherichia coli.